We begin with the raw amino-acid sequence, 403 residues long: Tetratricopeptide repeat protein 19, mitochondrial (403 aa).

The transit peptide at 1-67 directs the protein to the mitochondrion; the sequence is MALRSYCRQL…WHRRSWHRCA (67 aa). TPR repeat units lie at residues 154-187, 297-330, and 336-369; these read IYTY…MLSG, LVLM…GQAA, and HVLL…AHTA.

Belongs to the TTC19 family. In terms of assembly, binds to the mature mitochondrial complex III dimer, after the incorporation of the Rieske protein (UQCRFS1). Interacts with UQCRC1 and UQCRFS1. Interacts with ZFYVE26 and CHMP4B.

The protein localises to the mitochondrion inner membrane. Its function is as follows. Required for the preservation of the structural and functional integrity of mitochondrial respiratory complex III by allowing the physiological turnover of the Rieske protein UQCRFS1. Involved in the clearance of UQCRFS1 N-terminal fragments, which are produced upon incorporation into the complex III and whose presence is detrimental for its catalytic activity. The chain is Tetratricopeptide repeat protein 19, mitochondrial (ttc19) from Danio rerio (Zebrafish).